The following is a 138-amino-acid chain: Ribulose bisphosphate carboxylase small subunit (138 aa).

This sequence belongs to the RuBisCO small chain family. In terms of assembly, heterohexadecamer of 8 large and 8 small subunits.

Its subcellular location is the plastid. The protein resides in the chloroplast. Its function is as follows. RuBisCO catalyzes two reactions: the carboxylation of D-ribulose 1,5-bisphosphate, the primary event in carbon dioxide fixation, as well as the oxidative fragmentation of the pentose substrate in the photorespiration process. Both reactions occur simultaneously and in competition at the same active site. Although the small subunit is not catalytic it is essential for maximal activity. The sequence is that of Ribulose bisphosphate carboxylase small subunit from Antithamnion sp. (Red alga).